A 74-amino-acid chain; its full sequence is ATP synthase subunit c (74 aa).

2 consecutive transmembrane segments (helical) span residues 5–25 (LAHI…IGVG) and 49–69 (LFIG…VALL).

It belongs to the ATPase C chain family. In terms of assembly, F-type ATPases have 2 components, F(1) - the catalytic core - and F(0) - the membrane proton channel. F(1) has five subunits: alpha(3), beta(3), gamma(1), delta(1), epsilon(1). F(0) has four main subunits: a(1), b(1), b'(1) and c(10-14). The alpha and beta chains form an alternating ring which encloses part of the gamma chain. F(1) is attached to F(0) by a central stalk formed by the gamma and epsilon chains, while a peripheral stalk is formed by the delta, b and b' chains.

The protein resides in the cell inner membrane. Functionally, f(1)F(0) ATP synthase produces ATP from ADP in the presence of a proton or sodium gradient. F-type ATPases consist of two structural domains, F(1) containing the extramembraneous catalytic core and F(0) containing the membrane proton channel, linked together by a central stalk and a peripheral stalk. During catalysis, ATP synthesis in the catalytic domain of F(1) is coupled via a rotary mechanism of the central stalk subunits to proton translocation. In terms of biological role, key component of the F(0) channel; it plays a direct role in translocation across the membrane. A homomeric c-ring of between 10-14 subunits forms the central stalk rotor element with the F(1) delta and epsilon subunits. The polypeptide is ATP synthase subunit c (Roseobacter denitrificans (strain ATCC 33942 / OCh 114) (Erythrobacter sp. (strain OCh 114))).